We begin with the raw amino-acid sequence, 264 residues long: Thymidylate synthase (264 aa).

Arginine 21 lines the dUMP pocket. Histidine 51 provides a ligand contact to (6R)-5,10-methylene-5,6,7,8-tetrahydrofolate. Residue 126–127 coordinates dUMP; it reads RR. Residue cysteine 146 is the Nucleophile of the active site. DUMP contacts are provided by residues 166-169, asparagine 177, and 207-209; these read RSAD and HIY. Residue aspartate 169 coordinates (6R)-5,10-methylene-5,6,7,8-tetrahydrofolate. Residue alanine 263 coordinates (6R)-5,10-methylene-5,6,7,8-tetrahydrofolate.

The protein belongs to the thymidylate synthase family. Bacterial-type ThyA subfamily. Homodimer.

The protein localises to the cytoplasm. The catalysed reaction is dUMP + (6R)-5,10-methylene-5,6,7,8-tetrahydrofolate = 7,8-dihydrofolate + dTMP. It participates in pyrimidine metabolism; dTTP biosynthesis. Functionally, catalyzes the reductive methylation of 2'-deoxyuridine-5'-monophosphate (dUMP) to 2'-deoxythymidine-5'-monophosphate (dTMP) while utilizing 5,10-methylenetetrahydrofolate (mTHF) as the methyl donor and reductant in the reaction, yielding dihydrofolate (DHF) as a by-product. This enzymatic reaction provides an intracellular de novo source of dTMP, an essential precursor for DNA biosynthesis. The sequence is that of Thymidylate synthase from Bacteroides fragilis (strain ATCC 25285 / DSM 2151 / CCUG 4856 / JCM 11019 / LMG 10263 / NCTC 9343 / Onslow / VPI 2553 / EN-2).